We begin with the raw amino-acid sequence, 401 residues long: Elongation factor Tu (401 aa).

One can recognise a tr-type G domain in the interval 10-209; the sequence is KPHINVGTIG…AVDEYIPTPQ (200 aa). The tract at residues 19–26 is G1; that stretch reads GHVDHGKT. 19–26 is a GTP binding site; that stretch reads GHVDHGKT. Thr26 lines the Mg(2+) pocket. The interval 60–64 is G2; the sequence is GITIA. The segment at 81–84 is G3; that stretch reads DCPG. GTP contacts are provided by residues 81-85 and 136-139; these read DCPGH and NKVD. The interval 136-139 is G4; the sequence is NKVD. A G5 region spans residues 174–176; the sequence is SAR.

Belongs to the TRAFAC class translation factor GTPase superfamily. Classic translation factor GTPase family. EF-Tu/EF-1A subfamily. As to quaternary structure, monomer.

The protein resides in the cytoplasm. The enzyme catalyses GTP + H2O = GDP + phosphate + H(+). Its function is as follows. GTP hydrolase that promotes the GTP-dependent binding of aminoacyl-tRNA to the A-site of ribosomes during protein biosynthesis. The protein is Elongation factor Tu of Chloroflexus aurantiacus (strain ATCC 29366 / DSM 635 / J-10-fl).